Reading from the N-terminus, the 126-residue chain is UPF0235 protein C15orf40 homolog (126 aa).

The tract at residues 1 to 33 (MPKKAGATSKGKNQTKEPETPPPPTGPVATDSK) is disordered. Position 89 is a phosphoserine (Ser89).

It belongs to the UPF0235 family.

In Rattus norvegicus (Rat), this protein is UPF0235 protein C15orf40 homolog.